We begin with the raw amino-acid sequence, 420 residues long: Histidine--tRNA ligase, chloroplastic (420 aa).

This sequence belongs to the class-II aminoacyl-tRNA synthetase family.

The protein localises to the plastid. Its subcellular location is the chloroplast. It catalyses the reaction tRNA(His) + L-histidine + ATP = L-histidyl-tRNA(His) + AMP + diphosphate + H(+). The polypeptide is Histidine--tRNA ligase, chloroplastic (Gracilaria tenuistipitata var. liui (Red alga)).